The chain runs to 391 residues: Probable protein phosphatase 2C 32 (391 aa).

The segment at 1 to 53 (MSCTVAIPSSPVFSPSRRPLSCKAASASASPESVSVAASSPAQAAPPAGSPLR) is disordered. Low complexity predominate over residues 8 to 51 (PSSPVFSPSRRPLSCKAASASASPESVSVAASSPAQAAPPAGSP). The helical transmembrane segment at 95 to 115 (LVVPVCGGAAAAAAAAAVAAV) threads the bilayer. The PPM-type phosphatase domain occupies 129–386 (EFAVYCRRGK…DDISIVIIQL (258 aa)). Positions 168, 169, 332, and 377 each coordinate Mn(2+).

This sequence belongs to the PP2C family. Mg(2+) serves as cofactor. It depends on Mn(2+) as a cofactor.

Its subcellular location is the membrane. The enzyme catalyses O-phospho-L-seryl-[protein] + H2O = L-seryl-[protein] + phosphate. It catalyses the reaction O-phospho-L-threonyl-[protein] + H2O = L-threonyl-[protein] + phosphate. The polypeptide is Probable protein phosphatase 2C 32 (Oryza sativa subsp. japonica (Rice)).